Consider the following 656-residue polypeptide: UvrABC system protein B (656 aa).

The region spanning 23–180 (EGIKKGYRFQ…QHLAKIGYER (158 aa)) is the Helicase ATP-binding domain. 36 to 43 (GVTGSGKT) provides a ligand contact to ATP. Positions 89 to 112 (YYDYYQPEAYVPTKDLYIEKNADI) match the Beta-hairpin motif. Residues 426-588 (QVDDLISEIK…ITPKTIVKPL (163 aa)) form the Helicase C-terminal domain. One can recognise a UVR domain in the interval 614–649 (EEYLSLLEEEMYRAASELRYEDAAKLRDEIFRLREE).

It belongs to the UvrB family. In terms of assembly, forms a heterotetramer with UvrA during the search for lesions. Interacts with UvrC in an incision complex.

It localises to the cytoplasm. In terms of biological role, the UvrABC repair system catalyzes the recognition and processing of DNA lesions. A damage recognition complex composed of 2 UvrA and 2 UvrB subunits scans DNA for abnormalities. Upon binding of the UvrA(2)B(2) complex to a putative damaged site, the DNA wraps around one UvrB monomer. DNA wrap is dependent on ATP binding by UvrB and probably causes local melting of the DNA helix, facilitating insertion of UvrB beta-hairpin between the DNA strands. Then UvrB probes one DNA strand for the presence of a lesion. If a lesion is found the UvrA subunits dissociate and the UvrB-DNA preincision complex is formed. This complex is subsequently bound by UvrC and the second UvrB is released. If no lesion is found, the DNA wraps around the other UvrB subunit that will check the other stand for damage. This Pseudothermotoga lettingae (strain ATCC BAA-301 / DSM 14385 / NBRC 107922 / TMO) (Thermotoga lettingae) protein is UvrABC system protein B.